Reading from the N-terminus, the 669-residue chain is Putative heme-binding protein rrnAC3100 (669 aa).

Position 181 (histidine 181) interacts with heme. 2 disordered regions span residues 260 to 351 (RVPT…PDVS) and 451 to 477 (LGGS…ESSQ). Residues 579-667 (GTMGMFYTVK…VLADRPRHVF (89 aa)) enclose the ABM domain.

The protein in the N-terminal section; belongs to the ChdC family.

The sequence is that of Putative heme-binding protein rrnAC3100 from Haloarcula marismortui (strain ATCC 43049 / DSM 3752 / JCM 8966 / VKM B-1809) (Halobacterium marismortui).